We begin with the raw amino-acid sequence, 139 residues long: Large-conductance mechanosensitive channel (139 aa).

Helical transmembrane passes span 14-34 (VIDLAVGVIVGAAFTAIINSL) and 81-101 (GSFLTAVINFLLIAFVVFMIV).

The protein belongs to the MscL family. As to quaternary structure, homopentamer.

It is found in the cell membrane. Channel that opens in response to stretch forces in the membrane lipid bilayer. May participate in the regulation of osmotic pressure changes within the cell. This chain is Large-conductance mechanosensitive channel, found in Chloroflexus aurantiacus (strain ATCC 29366 / DSM 635 / J-10-fl).